The chain runs to 529 residues: Structure-specific endonuclease subunit SLX1 homolog 1 (529 aa).

The region spanning 4–89 is the GIY-YIG domain; sequence RFHCVYLLTS…PTKSTRLKTQ (86 aa). The SLX1-type zinc finger occupies 231–364; sequence CALCSLPLRS…PCQPCPCPLC (134 aa). Disordered regions lie at residues 275–305, 409–437, and 470–501; these read VTMG…MDAH, NSSL…YCGD, and SVSL…RMTD. Over residues 282-297 the composition is skewed to basic and acidic residues; the sequence is RNERSGEYSNKIKDDS.

This sequence belongs to the SLX1 family. Forms a heterodimer with a member of the SLX4 family. The cofactor is a divalent metal cation.

The protein localises to the nucleus. Catalytic subunit of a heterodimeric structure-specific endonuclease that resolves DNA secondary structures generated during DNA repair and recombination. Has endonuclease activity towards branched DNA substrates, introducing single-strand cuts in duplex DNA close to junctions with ss-DNA. The polypeptide is Structure-specific endonuclease subunit SLX1 homolog 1 (Trypanosoma cruzi (strain CL Brener)).